We begin with the raw amino-acid sequence, 348 residues long: MARPMGKLPSNTRKCAQCAMAEALLEIAGQTINQKDLGRSGRMTRTDNDTWDLASSVGATATMIATARALASRAENPLINDPFAEPLVRAVGIDLFTRLASGELRLEDIGDHATGGRWMIDNIAIRTKFYDDFFGDATTAGIRQVVILAAGLDTRAYRLPWPPGTVVYEIDQPAVIKFKTRALANLNAEPNAERHAVAVDLRNDWPTALKNAGFDPARPTAFSAEGLLSYLPPQGQDRLLDAITALSAPDSRLATQSPLVLDLAEEDEKKMRMKSAAEAWRERGFDLDLTELIYFDQRNDVADYLAGSGWQVTTSTGKELFAAQGLPPFADDHITRFADRRYISAVLK.

Residues aspartate 171 and 200–201 contribute to the S-adenosyl-L-methionine site; that span reads DL.

Belongs to the UPF0677 family.

In terms of biological role, exhibits S-adenosyl-L-methionine-dependent methyltransferase activity. The polypeptide is Putative S-adenosyl-L-methionine-dependent methyltransferase MRA_3439 (Mycobacterium tuberculosis (strain ATCC 25177 / H37Ra)).